The chain runs to 271 residues: MPELPEVETIRRGISPWVIDQKVVAVVVRQPRLRWPVPSNLSACLVGYAFSGVERRAKYLLLPNPAGCLLIHLGMSGSLRIVPSDTPPAAHDHVDIALESGRTLRLNDPRRFGAVLWIEGRPEDHALLAHLGPEPFAVEFTGAMLYARSRGRKLAVKNFIMDQRIVVGVGNIYASEALYRAGIHPMRAAGRVSRRRYAALAEAVRQVLTAAIEAGGTTLRDFTDENGRPGYFSQRLLVYGREGQPCVHCGRPIRCETIGQRSSYFCTRCQR.

P2 acts as the Schiff-base intermediate with DNA in catalysis. E3 acts as the Proton donor in catalysis. Residue K58 is the Proton donor; for beta-elimination activity of the active site. DNA is bound by residues H91, R110, and R152. An FPG-type zinc finger spans residues 237 to 271 (LVYGREGQPCVHCGRPIRCETIGQRSSYFCTRCQR). R261 acts as the Proton donor; for delta-elimination activity in catalysis.

Belongs to the FPG family. Monomer. Requires Zn(2+) as cofactor.

The catalysed reaction is Hydrolysis of DNA containing ring-opened 7-methylguanine residues, releasing 2,6-diamino-4-hydroxy-5-(N-methyl)formamidopyrimidine.. It catalyses the reaction 2'-deoxyribonucleotide-(2'-deoxyribose 5'-phosphate)-2'-deoxyribonucleotide-DNA = a 3'-end 2'-deoxyribonucleotide-(2,3-dehydro-2,3-deoxyribose 5'-phosphate)-DNA + a 5'-end 5'-phospho-2'-deoxyribonucleoside-DNA + H(+). Its function is as follows. Involved in base excision repair of DNA damaged by oxidation or by mutagenic agents. Acts as a DNA glycosylase that recognizes and removes damaged bases. Has a preference for oxidized purines, such as 7,8-dihydro-8-oxoguanine (8-oxoG). Has AP (apurinic/apyrimidinic) lyase activity and introduces nicks in the DNA strand. Cleaves the DNA backbone by beta-delta elimination to generate a single-strand break at the site of the removed base with both 3'- and 5'-phosphates. The protein is Formamidopyrimidine-DNA glycosylase of Syntrophotalea carbinolica (strain DSM 2380 / NBRC 103641 / GraBd1) (Pelobacter carbinolicus).